We begin with the raw amino-acid sequence, 182 residues long: Large ribosomal subunit protein uL6 (182 aa).

It belongs to the universal ribosomal protein uL6 family. Part of the 50S ribosomal subunit.

Functionally, this protein binds to the 23S rRNA, and is important in its secondary structure. It is located near the subunit interface in the base of the L7/L12 stalk, and near the tRNA binding site of the peptidyltransferase center. This chain is Large ribosomal subunit protein uL6, found in Karelsulcia muelleri (strain GWSS) (Sulcia muelleri).